The chain runs to 580 residues: Arginine--tRNA ligase (580 aa).

Residues 131 to 141 (ANPTGPMHVGH) carry the 'HIGH' region motif.

It belongs to the class-I aminoacyl-tRNA synthetase family. In terms of assembly, monomer.

The protein localises to the cytoplasm. The enzyme catalyses tRNA(Arg) + L-arginine + ATP = L-arginyl-tRNA(Arg) + AMP + diphosphate. The protein is Arginine--tRNA ligase of Cereibacter sphaeroides (strain ATCC 17025 / ATH 2.4.3) (Rhodobacter sphaeroides).